Here is a 518-residue protein sequence, read N- to C-terminus: DNA-binding protein Ikaros (518 aa).

Positions 1 to 51 (METDEAQDMSQVSGKESPPISDVPDDADEPMPVPEDLSTTTGGQQSVKNER) are disordered. The segment covering 37–47 (LSTTTGGQQSV) has biased composition (polar residues). C2H2-type zinc fingers lie at residues 117 to 139 (LKCDICGIICIGPNVLMVHNRSH), 145 to 167 (FQCNQCGASFTQKGNLLRHIKLH), 173 to 195 (FKCHLCNYACRRRDALTGHLRTH), and 201 to 224 (HKCGYCGRSYKQRSSLEEHKERCH). The tract at residues 381-405 (SVSSERDASPSNSCQDSTDTESNNE) is disordered. C2H2-type zinc fingers lie at residues 461 to 483 (YKCEHCRVLFLDHVMYTIHMGCH) and 489 to 513 (FECNMCGYHSQDRYEFSSHITRGEH).

It belongs to the Ikaros C2H2-type zinc-finger protein family. In terms of tissue distribution, expressed in embryonic hematopoietic organs such as the bursa of Fabricius, thymus and spleen. In the adult, expressed in spleen, thymus, bursa and peripheral blood leukocytes.

It is found in the nucleus. Its function is as follows. Binds and activates the enhancer (delta-A element) of the CD3-delta gene. Functions in the specification and the maturation of the T-lymphocyte. Also interacts with a critical control element in the TDT (terminal deoxynucleotidyltransferase) promoter as well as with the promoters for other genes expressed during early stages of B- and T-cell development. Function is isoform-specific and is modulated by dominant-negative inactive isoforms. The sequence is that of DNA-binding protein Ikaros (IKZF1) from Gallus gallus (Chicken).